A 705-amino-acid polypeptide reads, in one-letter code: uncharacterized protein (705 aa).

Residues 24 to 52 (CHFCRVRKLKCDRVRPFCGSCSSRNRKQC) constitute a DNA-binding region (zn(2)-C6 fungal-type).

The protein resides in the nucleus. This is an uncharacterized protein from Saccharomyces cerevisiae (strain ATCC 204508 / S288c) (Baker's yeast).